A 608-amino-acid chain; its full sequence is uncharacterized protein (608 aa).

An N-terminal signal peptide occupies residues 1-38 (MWLQQRLKVFPGLLSSSWARRVLAVSGFLVIIYWYIFS). At 39–563 (GSLFRSFWYA…EEHMAKQYRG (525 aa)) the chain is on the extracellular side. A glycan (N-linked (GlcNAc...) asparagine) is linked at Asn337. A helical transmembrane segment spans residues 564–584 (LPFLFWFSVASLITLFHLFLF). Over 585 to 608 (KLIYNEYCGPGAKPLFRSKEDTSV) the chain is Cytoplasmic.

It is found in the membrane. This is an uncharacterized protein from Xenopus tropicalis (Western clawed frog).